We begin with the raw amino-acid sequence, 273 residues long: Lactose transport system permease protein LacG (273 aa).

Helical transmembrane passes span 15 to 35 (YSVLSLAAFLSIFPFIWMVIG), 77 to 97 (IALVGTALTLLVSSLAGYGFE), 110 to 130 (VILLTLMVPFAALMIPLFMLM), 134 to 154 (GLLNTHIAIMLPMIASAFIIF), 182 to 204 (FFYIYVPVMRSTYAAAFVIVFML), and 240 to 260 (GTVMIGTILATLPTLLVFFAM). In terms of domain architecture, ABC transmembrane type-1 spans 71–260 (FWNSVKIALV…LPTLLVFFAM (190 aa)).

The protein belongs to the binding-protein-dependent transport system permease family. MalFG subfamily.

Its subcellular location is the cell inner membrane. Its function is as follows. Part of the binding-protein-dependent transport system for lactose. Probably responsible for the translocation of the substrate across the membrane. The protein is Lactose transport system permease protein LacG (lacG) of Rhizobium radiobacter (Agrobacterium tumefaciens).